Consider the following 259-residue polypeptide: BTB/POZ domain-containing protein KCTD4 (259 aa).

Residues Met1–Glu22 form a disordered region. Residues Thr33 to Gln134 form the BTB domain.

The polypeptide is BTB/POZ domain-containing protein KCTD4 (KCTD4) (Bos taurus (Bovine)).